The chain runs to 141 residues: VLSAADKANVKAAWGKVGGQAGAHGAEALERMFLGFPTTKTYFPHFNLSHGSDQVKAHGQKVADALTKAVGHLDDLPGALSALSDLHAHKLRVDPVNFKLLSHCLLVTLAAHHPDDFNPSVHASLDKFLANVSTVLTSKYR.

The Globin domain maps to 1 to 141 (VLSAADKANV…VSTVLTSKYR (141 aa)). S3 carries the phosphoserine modification. An N6-succinyllysine mark is found at K7 and K11. An N6-acetyllysine; alternate modification is found at K16. K16 is subject to N6-succinyllysine; alternate. N6-succinyllysine is present on K40. Residue S49 is modified to Phosphoserine. H58 contributes to the O2 binding site. H87 contacts heme b. Position 102 is a phosphoserine (S102). At T108 the chain carries Phosphothreonine. S124 carries the phosphoserine modification. 2 positions are modified to phosphothreonine: T134 and T137. A Phosphoserine modification is found at S138.

Belongs to the globin family. Heterotetramer of two alpha chains and two beta chains. In terms of tissue distribution, red blood cells.

Its function is as follows. Involved in oxygen transport from the lung to the various peripheral tissues. Hemopressin acts as an antagonist peptide of the cannabinoid receptor CNR1. Hemopressin-binding efficiently blocks cannabinoid receptor CNR1 and subsequent signaling. The chain is Hemoglobin subunit alpha (HBA) from Sus scrofa (Pig).